The primary structure comprises 551 residues: E3 SUMO-protein ligase CBX4 (551 aa).

In terms of domain architecture, Chromo spans 11-69; the sequence is FAVESIEKKRIRKGRVEYLVKWRGWSPKYNTWEPEENILDPRLLIAFQNRERQEQLMGY. Residues Lys77, Lys106, Lys114, and Lys125 each participate in a glycyl lysine isopeptide (Lys-Gly) (interchain with G-Cter in SUMO2) cross-link. A disordered region spans residues 125-152; that stretch reads KKHHQYQPHSKERSGKPPPPGKSGKYYY. Lys149 carries the N6-acetyllysine; alternate modification. Lys149 participates in a covalent cross-link: Glycyl lysine isopeptide (Lys-Gly) (interchain with G-Cter in SUMO2); alternate. Glycyl lysine isopeptide (Lys-Gly) (interchain with G-Cter in SUMO2) cross-links involve residues Lys157, Lys167, and Lys178. A disordered region spans residues 172-193; that stretch reads QYQGGHKEAPSPTCPDLGTKSH. Ser182 bears the Phosphoserine mark. Glycyl lysine isopeptide (Lys-Gly) (interchain with G-Cter in SUMO2) cross-links involve residues Lys191, Lys205, Lys212, Lys223, Lys249, Lys268, Lys278, and Lys280. Residues 216–244 are disordered; the sequence is GGAGAPGKGSEKGPPNGMTPAPKEAVTGN. Basic and acidic residues-rich tracts occupy residues 281-291, 298-310, and 317-332; these read SGEAAEGEARS, AAEE…DRTF, and SEEK…REEE. 2 disordered regions span residues 281–399 and 430–451; these read SGEA…TVGL and TPTC…PTAA. Glycyl lysine isopeptide (Lys-Gly) (interchain with G-Cter in SUMO2) cross-links involve residues Lys321, Lys353, and Lys366. Over residues 381-396 the composition is skewed to basic residues; the sequence is PAHHHHHHHHHHHHHT. Position 463 is a phosphoserine (Ser463). Lys490 is covalently cross-linked (Glycyl lysine isopeptide (Lys-Gly) (interchain with G-Cter in SUMO2); alternate). Lys490 participates in a covalent cross-link: Glycyl lysine isopeptide (Lys-Gly) (interchain with G-Cter in SUMO); alternate.

In terms of assembly, interacts with SUV39H1 and HIPK2. Interacts with CSNK2B. Component of a PRC1-like complex. The composition of the PRC1 complex differs between the PRC1 complex in pluripotent embryonic stem cells containing RNF2, CBX7 and PCGF2, and the PRC1 complex in differentiating cells containing RNF2, CBX2, CBX4 and BMI1. Interacts with RNF2. Interacts (via chromodomain) with histone H3K9Me3 and single-stranded RNA (ssRNA). Interacts with CHTOP. May interact with H3C15 and H3C1. Interacts with PRDM1. Ubiquitinated. Ubiquitination regulates the function of the Polycomb group (PcG) multiprotein PRC1-like complex. Deubiquitinated by USP26. In terms of tissue distribution, expressed in embryoid bodies.

Its subcellular location is the nucleus. The protein resides in the nucleus speckle. It functions in the pathway protein modification; protein sumoylation. Functionally, E3 SUMO-protein ligase that catalyzes sumoylation of target proteins by promoting the transfer of SUMO from the E2 enzyme to the substrate. Involved in the sumoylation of HNRNPK, a p53/TP53 transcriptional coactivator, hence indirectly regulates p53/TP53 transcriptional activation resulting in p21/CDKN1A expression. Its function is as follows. Component of a Polycomb group (PcG) multiprotein PRC1-like complex, a complex class required to maintain the transcriptionally repressive state of many genes, including Hox genes, throughout development. PcG PRC1 complex acts via chromatin remodeling and modification of histones; it mediates monoubiquitination of histone H2A 'Lys-119', rendering chromatin heritably changed in its expressibility. Binds to histone H3 trimethylated at 'Lys-9' (H3K9me3). Plays a role in the lineage differentiation of the germ layers in embryonic development. This Mus musculus (Mouse) protein is E3 SUMO-protein ligase CBX4 (Cbx4).